A 277-amino-acid chain; its full sequence is Sulfur carrier protein FdhD (277 aa).

The Cysteine persulfide intermediate role is filled by Cys-121. 260-265 (FCKPGR) provides a ligand contact to Mo-bis(molybdopterin guanine dinucleotide).

This sequence belongs to the FdhD family.

Its subcellular location is the cytoplasm. Its function is as follows. Required for formate dehydrogenase (FDH) activity. Acts as a sulfur carrier protein that transfers sulfur from IscS to the molybdenum cofactor prior to its insertion into FDH. This is Sulfur carrier protein FdhD from Shigella dysenteriae serotype 1 (strain Sd197).